A 306-amino-acid polypeptide reads, in one-letter code: Low-density lipoprotein receptor class A domain-containing protein 4 (306 aa).

At 1-64 the chain is on the lumenal side; the sequence is MPEAGFQATN…PPGIFNSELE (64 aa). The LDL-receptor class A domain occupies 11–48; that stretch reads AFTECKFTCTSGKCLYLGSLVCNQQNDCGDNSDEENCL. 2 disulfide bridges follow: Cys19–Cys38 and Cys32–Cys47. Residues 65 to 85 form a helical membrane-spanning segment; it reads FAQILIIVVVVTVMVVVVVCL. Topologically, residues 86-306 are cytoplasmic; it reads LNHYKVSTRS…GKDRKPGDLV (221 aa). The disordered stretch occupies residues 100–127; it reads PNQSQRQEDGLQPEGSLWPSDSSVQRPG. Positions 180-183 match the PPxY motif 1 motif; it reads PPPY. Residues 208-211 carry the SMAD interaction motif (SIM) motif; the sequence is PPNR. The short motif at 252 to 255 is the PPxY motif 2 element; that stretch reads PPTY. A disordered region spans residues 268–306; sequence FHHQHSNTHRGSRPQFQPNNSEGTIVPIKGKDRKPGDLV. A compositionally biased stretch (basic residues) spans 269–279; the sequence is HHQHSNTHRGS. The segment covering 281-290 has biased composition (polar residues); sequence PQFQPNNSEG. The segment covering 296 to 306 has biased composition (basic and acidic residues); the sequence is KGKDRKPGDLV.

This sequence belongs to the PMEPA1 family. In terms of assembly, interacts with PMEPA1. Interacts (via the SMAD interaction motif) with SMAD2 and SMAD3. In terms of tissue distribution, detected in all tissues tested.

It is found in the early endosome membrane. Functionally, functions as a negative regulator of TGF-beta signaling and thereby probably plays a role in cell proliferation, differentiation, apoptosis, motility, extracellular matrix production and immunosuppression. In the canonical TGF-beta pathway, ZFYVE9/SARA recruits the intracellular signal transducer and transcriptional modulators SMAD2 and SMAD3 to the TGF-beta receptor. Phosphorylated by the receptor, SMAD2 and SMAD3 then form a heteromeric complex with SMAD4 that translocates to the nucleus to regulate transcription. Through interaction with SMAD2 and SMAD3, LDLRAD4 may compete with ZFYVE9 and SMAD4 and prevent propagation of the intracellular signal. In Mus musculus (Mouse), this protein is Low-density lipoprotein receptor class A domain-containing protein 4 (Ldlrad4).